A 284-amino-acid polypeptide reads, in one-letter code: NADPH-dependent 7-cyano-7-deazaguanine reductase (284 aa).

91-93 contributes to the substrate binding site; the sequence is IES. 93 to 94 contacts NADPH; it reads SK. The active-site Thioimide intermediate is cysteine 192. Aspartate 199 acts as the Proton donor in catalysis. 231 to 232 serves as a coordination point for substrate; that stretch reads HE. Position 260 to 261 (260 to 261) interacts with NADPH; it reads RG.

The protein belongs to the GTP cyclohydrolase I family. QueF type 2 subfamily. As to quaternary structure, homodimer.

The protein localises to the cytoplasm. It carries out the reaction 7-aminomethyl-7-carbaguanine + 2 NADP(+) = 7-cyano-7-deazaguanine + 2 NADPH + 3 H(+). The protein operates within tRNA modification; tRNA-queuosine biosynthesis. Its function is as follows. Catalyzes the NADPH-dependent reduction of 7-cyano-7-deazaguanine (preQ0) to 7-aminomethyl-7-deazaguanine (preQ1). This is NADPH-dependent 7-cyano-7-deazaguanine reductase from Shewanella denitrificans (strain OS217 / ATCC BAA-1090 / DSM 15013).